The following is a 293-amino-acid chain: tRNA-cytidine(32) 2-sulfurtransferase (293 aa).

The short motif at 62-67 (SGGKDS) is the PP-loop motif element. C137, C140, and C228 together coordinate [4Fe-4S] cluster.

Belongs to the TtcA family. Homodimer. It depends on Mg(2+) as a cofactor. Requires [4Fe-4S] cluster as cofactor.

It is found in the cytoplasm. The enzyme catalyses cytidine(32) in tRNA + S-sulfanyl-L-cysteinyl-[cysteine desulfurase] + AH2 + ATP = 2-thiocytidine(32) in tRNA + L-cysteinyl-[cysteine desulfurase] + A + AMP + diphosphate + H(+). Its pathway is tRNA modification. Functionally, catalyzes the ATP-dependent 2-thiolation of cytidine in position 32 of tRNA, to form 2-thiocytidine (s(2)C32). The sulfur atoms are provided by the cysteine/cysteine desulfurase (IscS) system. The sequence is that of tRNA-cytidine(32) 2-sulfurtransferase from Brucella abortus (strain S19).